The primary structure comprises 57 residues: Large ribosomal subunit protein bL32 (57 aa).

Positions 1–19 (MAVPKRRMSRSNTRSRRSQ) are enriched in basic residues. A disordered region spans residues 1–22 (MAVPKRRMSRSNTRSRRSQWKA).

It belongs to the bacterial ribosomal protein bL32 family.

The polypeptide is Large ribosomal subunit protein bL32 (Rhodococcus jostii (strain RHA1)).